Here is a 101-residue protein sequence, read N- to C-terminus: Urease subunit beta (101 aa).

The protein belongs to the urease beta subunit family. Heterotrimer of UreA (gamma), UreB (beta) and UreC (alpha) subunits. Three heterotrimers associate to form the active enzyme.

The protein localises to the cytoplasm. The enzyme catalyses urea + 2 H2O + H(+) = hydrogencarbonate + 2 NH4(+). It participates in nitrogen metabolism; urea degradation; CO(2) and NH(3) from urea (urease route): step 1/1. The chain is Urease subunit beta from Cupriavidus pinatubonensis (strain JMP 134 / LMG 1197) (Cupriavidus necator (strain JMP 134)).